The primary structure comprises 519 residues: Serine/threonine-protein kinase RIO3 (519 aa).

Residues S8, S112, S125, S127, and S128 each carry the phosphoserine modification. Residues F122–G159 form a disordered region. Residues D124 to W134 are compositionally biased toward acidic residues. Residues E251–D519 form the Protein kinase domain. Residues I257 to V265 and K290 contribute to the ATP site. The active-site Proton acceptor is the D406. S512 carries the phosphoserine modification.

It belongs to the protein kinase superfamily. RIO-type Ser/Thr kinase family. In terms of assembly, interacts with CASP10. Interacts with IRF3; RIOK3 probably mediates the interaction of TBK1 with IRF3. Associated with 40S pre-ribosomal particles. The cofactor is Mg(2+). In terms of processing, autophosphorylated (in vitro).

It is found in the cytoplasm. It carries out the reaction L-seryl-[protein] + ATP = O-phospho-L-seryl-[protein] + ADP + H(+). The catalysed reaction is L-threonyl-[protein] + ATP = O-phospho-L-threonyl-[protein] + ADP + H(+). Involved in regulation of type I interferon (IFN)-dependent immune response which plays a critical role in the innate immune response against DNA and RNA viruses. May act as an adapter protein essential for the recruitment of TBK1 to IRF3. Phosphorylates IFIH1 on 'Ser-828' interfering with IFIH1 filament assembly on long dsRNA and resulting in attenuated IFIH1-signaling. Can inhibit CASP10 isoform 7-mediated activation of the NF-kappaB signaling pathway. May play a role in the biogenesis of the 40S ribosomal subunit. Involved in the processing of 21S pre-rRNA to the mature 18S rRNA. In Mus musculus (Mouse), this protein is Serine/threonine-protein kinase RIO3 (Riok3).